Consider the following 388-residue polypeptide: MNLHEYQAKQLFAEFGLPVPEGYACDTPQEAFEAAGRISTAKKVVKCQVHAGGRGKAGGVELHDTKEGVKAFAQKWLGKNLVTYQTDANGQPVSKILVEEASNIANELYLGAVVDRSTRRIVFMASTEGGVEIEKVAEETPELIHKAAIDPLVGPQAYQGRELAFKLGLQGDQIKQFVKIFMGLGEMFAQYDLALLEINPLVITAEGNLLCLDGKINIDSNAMYRQPKLRQMHDASQEDAREAHAAKWELNYVALDGNVGCMVNGAGLAMGTMDIVNLHGGKPANFLDVGGGATKERVAEAFKIILSDTNVKAVLVNIFGGIVRCDMIAEGIIGAVKEVGVSVPVVVRLEGTNAELGRKVLAESGLDIIAAVSLTDAAQKVVAAAEGK.

An ATP-grasp domain is found at 9–244 (KQLFAEFGLP…ASQEDAREAH (236 aa)). Residues lysine 46, 53–55 (GRG), glutamate 99, serine 102, and glutamate 107 each bind ATP. Residues asparagine 199 and aspartate 213 each contribute to the Mg(2+) site. Substrate is bound by residues asparagine 264 and 321–323 (GIV).

This sequence belongs to the succinate/malate CoA ligase beta subunit family. Heterotetramer of two alpha and two beta subunits. Requires Mg(2+) as cofactor.

It carries out the reaction succinate + ATP + CoA = succinyl-CoA + ADP + phosphate. It catalyses the reaction GTP + succinate + CoA = succinyl-CoA + GDP + phosphate. It participates in carbohydrate metabolism; tricarboxylic acid cycle; succinate from succinyl-CoA (ligase route): step 1/1. Functionally, succinyl-CoA synthetase functions in the citric acid cycle (TCA), coupling the hydrolysis of succinyl-CoA to the synthesis of either ATP or GTP and thus represents the only step of substrate-level phosphorylation in the TCA. The beta subunit provides nucleotide specificity of the enzyme and binds the substrate succinate, while the binding sites for coenzyme A and phosphate are found in the alpha subunit. The polypeptide is Succinate--CoA ligase [ADP-forming] subunit beta (Vibrio cholerae serotype O1 (strain ATCC 39541 / Classical Ogawa 395 / O395)).